We begin with the raw amino-acid sequence, 140 residues long: Nucleoside diphosphate kinase (140 aa).

Residues Lys-11, Phe-59, Arg-87, Thr-93, Arg-104, and Asn-114 each coordinate ATP. His-117 serves as the catalytic Pros-phosphohistidine intermediate.

Belongs to the NDK family. Homotetramer. Mg(2+) serves as cofactor.

It localises to the cytoplasm. It carries out the reaction a 2'-deoxyribonucleoside 5'-diphosphate + ATP = a 2'-deoxyribonucleoside 5'-triphosphate + ADP. The catalysed reaction is a ribonucleoside 5'-diphosphate + ATP = a ribonucleoside 5'-triphosphate + ADP. Functionally, major role in the synthesis of nucleoside triphosphates other than ATP. The ATP gamma phosphate is transferred to the NDP beta phosphate via a ping-pong mechanism, using a phosphorylated active-site intermediate. The sequence is that of Nucleoside diphosphate kinase from Brucella melitensis biotype 1 (strain ATCC 23456 / CCUG 17765 / NCTC 10094 / 16M).